A 72-amino-acid polypeptide reads, in one-letter code: Large ribosomal subunit protein uL30 (72 aa).

This sequence belongs to the universal ribosomal protein uL30 family. Part of the 50S ribosomal subunit.

This chain is Large ribosomal subunit protein uL30, found in Mycobacterium ulcerans (strain Agy99).